The following is a 132-amino-acid chain: Large ribosomal subunit protein uL14 (132 aa).

Belongs to the universal ribosomal protein uL14 family. In terms of assembly, part of the 50S ribosomal subunit. Forms a cluster with proteins L3 and L24e, part of which may contact the 16S rRNA in 2 intersubunit bridges.

Functionally, binds to 23S rRNA. Forms part of two intersubunit bridges in the 70S ribosome. The sequence is that of Large ribosomal subunit protein uL14 from Methanococcus vannielii.